The sequence spans 640 residues: SH3 domain-containing protein 21 (640 aa).

The disordered stretch occupies residues 1-60 (MVQSELQLQPRAGGRAEAASWGDRGNDKGGLGNPDMPSVSPGPQRPPKLSSLAYDSPPDY). One can recognise an SH3 domain in the interval 65–126 (SHPEVYRVLF…PDNFVLPPPP (62 aa)). Disordered regions lie at residues 133-361 (RKVV…PLGD), 401-551 (YFVA…PDSQ), and 618-640 (VQVMQGTQKSQTPRVIHTQTQTY). A compositionally biased stretch (basic and acidic residues) spans 177–186 (PSRDSQKLTS). The segment covering 210-220 (TQTPQQRSVSS) has biased composition (polar residues). Composition is skewed to basic and acidic residues over residues 401–416 (YFVAKEDPSSQEEAHT), 459–469 (ALEKPHPHEEA), and 494–532 (RPLREEVLPKEGVASKEEVTLKEELPPKEEVAPKEEVPP). Residues 572–626 (VDVTSLRGEVESLRRALELMEVQLERKLTDIWEELKSEKEQRRRLEVQVMQGTQK) are a coiled coil. The span at 621–640 (MQGTQKSQTPRVIHTQTQTY) shows a compositional bias: polar residues.

The polypeptide is SH3 domain-containing protein 21 (SH3D21) (Homo sapiens (Human)).